The following is a 507-amino-acid chain: Phospho-2-dehydro-3-deoxyheptonate aldolase 2, chloroplastic (507 aa).

This sequence belongs to the class-II DAHP synthase family.

It localises to the plastid. The protein localises to the chloroplast. The enzyme catalyses D-erythrose 4-phosphate + phosphoenolpyruvate + H2O = 7-phospho-2-dehydro-3-deoxy-D-arabino-heptonate + phosphate. It functions in the pathway metabolic intermediate biosynthesis; chorismate biosynthesis; chorismate from D-erythrose 4-phosphate and phosphoenolpyruvate: step 1/7. The polypeptide is Phospho-2-dehydro-3-deoxyheptonate aldolase 2, chloroplastic (DHS2) (Arabidopsis thaliana (Mouse-ear cress)).